A 272-amino-acid chain; its full sequence is Putative phosphoenolpyruvate synthase regulatory protein (272 aa).

Residue 152–159 coordinates ADP; sequence GVSRCGKT.

Belongs to the pyruvate, phosphate/water dikinase regulatory protein family. PSRP subfamily.

The catalysed reaction is [pyruvate, water dikinase] + ADP = [pyruvate, water dikinase]-phosphate + AMP + H(+). It catalyses the reaction [pyruvate, water dikinase]-phosphate + phosphate + H(+) = [pyruvate, water dikinase] + diphosphate. In terms of biological role, bifunctional serine/threonine kinase and phosphorylase involved in the regulation of the phosphoenolpyruvate synthase (PEPS) by catalyzing its phosphorylation/dephosphorylation. The protein is Putative phosphoenolpyruvate synthase regulatory protein of Pseudomonas fluorescens (strain Pf0-1).